Reading from the N-terminus, the 518-residue chain is 3-octaprenyl-4-hydroxybenzoate carboxy-lyase (518 aa).

Position 177 (Asn177) interacts with Mn(2+). Prenylated FMN is bound by residues 180 to 182 (IYR), 194 to 196 (RWL), and 199 to 200 (RG). Mn(2+) is bound at residue Glu243. Residue Asp318 is the Proton donor of the active site.

This sequence belongs to the UbiD family. As to quaternary structure, homohexamer. Prenylated FMN is required as a cofactor. The cofactor is Mn(2+).

Its subcellular location is the cell membrane. The catalysed reaction is a 4-hydroxy-3-(all-trans-polyprenyl)benzoate + H(+) = a 2-(all-trans-polyprenyl)phenol + CO2. It participates in cofactor biosynthesis; ubiquinone biosynthesis. In terms of biological role, catalyzes the decarboxylation of 3-octaprenyl-4-hydroxy benzoate to 2-octaprenylphenol, an intermediate step in ubiquinone biosynthesis. In Burkholderia orbicola (strain AU 1054), this protein is 3-octaprenyl-4-hydroxybenzoate carboxy-lyase.